The chain runs to 143 residues: Fluoride-specific ion channel FluC (143 aa).

A run of 4 helical transmembrane segments spans residues 3-23 (AVVW…GSGL), 41-61 (WGTL…LIWL), 76-96 (IVGL…CLVF), and 103-123 (LMVG…VFLG). Na(+)-binding residues include G81 and T84.

It belongs to the fluoride channel Fluc/FEX (TC 1.A.43) family.

It localises to the cell inner membrane. It carries out the reaction fluoride(in) = fluoride(out). Na(+) is not transported, but it plays an essential structural role and its presence is essential for fluoride channel function. Functionally, fluoride-specific ion channel. Important for reducing fluoride concentration in the cell, thus reducing its toxicity. The polypeptide is Fluoride-specific ion channel FluC (Xylella fastidiosa (strain 9a5c)).